The sequence spans 220 residues: Peptidyl-tRNA hydrolase (220 aa).

Tyrosine 14 provides a ligand contact to tRNA. Histidine 19 (proton acceptor) is an active-site residue. TRNA is bound by residues phenylalanine 60, asparagine 62, and asparagine 106.

It belongs to the PTH family. As to quaternary structure, monomer.

The protein localises to the cytoplasm. It catalyses the reaction an N-acyl-L-alpha-aminoacyl-tRNA + H2O = an N-acyl-L-amino acid + a tRNA + H(+). Its function is as follows. Hydrolyzes ribosome-free peptidyl-tRNAs (with 1 or more amino acids incorporated), which drop off the ribosome during protein synthesis, or as a result of ribosome stalling. Functionally, catalyzes the release of premature peptidyl moieties from peptidyl-tRNA molecules trapped in stalled 50S ribosomal subunits, and thus maintains levels of free tRNAs and 50S ribosomes. This chain is Peptidyl-tRNA hydrolase, found in Campylobacter hominis (strain ATCC BAA-381 / DSM 21671 / CCUG 45161 / LMG 19568 / NCTC 13146 / CH001A).